The sequence spans 458 residues: Zinc finger protein 239 (458 aa).

Residue lysine 108 forms a Glycyl lysine isopeptide (Lys-Gly) (interchain with G-Cter in SUMO2) linkage. Position 191 is a phosphoserine (serine 191). C2H2-type zinc fingers lie at residues 207–229 (YECS…QRDH), 235–257 (YKCE…QAVH), 263–285 (YKCD…HAVH), 291–313 (YKCD…QRVH), 319–341 (YECE…QRVH), 347–369 (YKCG…RCIH), 375–397 (YQCY…LRVH), 403–425 (YHCG…QRVH), and 431–453 (YECS…QRVH).

This sequence belongs to the krueppel C2H2-type zinc-finger protein family.

The protein localises to the nucleus. In terms of biological role, may be involved in transcriptional regulation. This Pongo abelii (Sumatran orangutan) protein is Zinc finger protein 239 (ZNF239).